A 477-amino-acid polypeptide reads, in one-letter code: Proline--tRNA ligase (477 aa).

It belongs to the class-II aminoacyl-tRNA synthetase family. ProS type 3 subfamily. In terms of assembly, homodimer.

Its subcellular location is the cytoplasm. The enzyme catalyses tRNA(Pro) + L-proline + ATP = L-prolyl-tRNA(Pro) + AMP + diphosphate. Functionally, catalyzes the attachment of proline to tRNA(Pro) in a two-step reaction: proline is first activated by ATP to form Pro-AMP and then transferred to the acceptor end of tRNA(Pro). The sequence is that of Proline--tRNA ligase from Methanoculleus marisnigri (strain ATCC 35101 / DSM 1498 / JR1).